The sequence spans 206 residues: Glycerol-3-phosphate acyltransferase 1 (206 aa).

5 helical membrane-spanning segments follow: residues 7 to 27 (LVIG…KIFL), 54 to 74 (ILTC…VYFI), 81 to 101 (DLSF…WNHF), 114 to 134 (IVFF…FLVI), and 155 to 175 (WINF…IMIF).

It belongs to the PlsY family. As to quaternary structure, probably interacts with PlsX.

Its subcellular location is the cell membrane. The enzyme catalyses an acyl phosphate + sn-glycerol 3-phosphate = a 1-acyl-sn-glycero-3-phosphate + phosphate. It functions in the pathway lipid metabolism; phospholipid metabolism. Functionally, catalyzes the transfer of an acyl group from acyl-phosphate (acyl-PO(4)) to glycerol-3-phosphate (G3P) to form lysophosphatidic acid (LPA). This enzyme utilizes acyl-phosphate as fatty acyl donor, but not acyl-CoA or acyl-ACP. The sequence is that of Glycerol-3-phosphate acyltransferase 1 from Lactobacillus johnsonii (strain CNCM I-12250 / La1 / NCC 533).